Here is a 486-residue protein sequence, read N- to C-terminus: Histamine H1 receptor (486 aa).

Residues 1-29 lie on the Extracellular side of the membrane; the sequence is MSFANTSSTFEDKMCEGNRTAMASPQLLP. N-linked (GlcNAc...) asparagine glycosylation is found at asparagine 5 and asparagine 18. A helical membrane pass occupies residues 30–50; sequence LVVVLSSISLVTVGLNLLVLY. The Cytoplasmic portion of the chain corresponds to 51-64; sequence AVHSERKLHTVGNL. Residues 65-89 form a helical membrane-spanning segment; it reads YIVSLSVADLIVGAVVMPMNILYLI. At 90–97 the chain is on the extracellular side; sequence MTKWSLGR. Residues 98 to 123 traverse the membrane as a helical segment; it reads PLCLFWLSMDYVASTASIFSVFILCI. A disulfide bridge links cysteine 100 with cysteine 180. Positions 107 and 112 each coordinate histamine. An important for agonist binding region spans residues 107–112; it reads DYVAST. Over 124-144 the chain is Cytoplasmic; the sequence is DRYRSVQQPLRYLRYRTKTRA. Residues threonine 140 and threonine 142 each carry the phosphothreonine modification. The helical transmembrane segment at 145 to 164 threads the bilayer; sequence SATILGAWFFSFLWVIPILG. The Extracellular segment spans residues 165–188; the sequence is WHHFMPPAPELREDKCETDFYNVT. Residues 189–211 traverse the membrane as a helical segment; the sequence is WFKIMTAIINFYLPTLLMLWFYV. Asparagine 198 is a histamine binding site. Residues 212–415 lie on the Cytoplasmic side of the membrane; the sequence is KIYKAVRRHC…LNRERKAAKQ (204 aa). A Phosphoserine modification is found at serine 230. The segment covering 241–253 has biased composition (basic and acidic residues); sequence SDDTKEGAKKPGR. 2 disordered regions span residues 241 to 295 and 310 to 379; these read SDDT…GERE and VAEG…RSGS. Phosphoserine occurs at positions 342 and 345. The segment covering 347-365 has biased composition (polar residues); sequence DQTLVDQQSFSRTTDSDTS. Phosphoserine is present on residues serine 379, serine 381, serine 395, and serine 397. A helical membrane pass occupies residues 416-439; that stretch reads LGFIMAAFILCWIPYFIFFMVIAF. The interval 423–427 is important for agonist binding; the sequence is FILCW. Position 430 (tyrosine 430) interacts with histamine. Residues cysteine 440 and cysteine 443 are joined by a disulfide bond. Topologically, residues 440–445 are extracellular; it reads CKSCCS. Residues 446–468 traverse the membrane as a helical segment; that stretch reads EPMHMFTIWLGYINSTLNPLIYP. Residues 469–486 lie on the Cytoplasmic side of the membrane; it reads LCNENFKKTFKKILHIRS.

This sequence belongs to the G-protein coupled receptor 1 family. In terms of processing, phosphorylation at sites in the second and third cytoplasmic loops independently contribute to agonist-induced receptor down-regulation.

It is found in the cell membrane. Its function is as follows. G-protein-coupled receptor for histamine, a biogenic amine that functions as an immune modulator and a neurotransmitter. Through the H1 receptor, histamine mediates the contraction of smooth muscles and increases capillary permeability due to contraction of terminal venules. Also mediates neurotransmission in the central nervous system and thereby regulates circadian rhythms, emotional and locomotor activities as well as cognitive functions. The chain is Histamine H1 receptor from Rattus norvegicus (Rat).